The following is a 189-amino-acid chain: Recombination protein RecR (189 aa).

The segment at 48–63 (CQTCFHLSAEPLCDIC) adopts a C4-type zinc-finger fold. The Toprim domain occupies 71 to 165 (QLLCVVADSR…QVSRIAYGLP (95 aa)).

The protein belongs to the RecR family.

May play a role in DNA repair. It seems to be involved in an RecBC-independent recombinational process of DNA repair. It may act with RecF and RecO. In Prochlorococcus marinus (strain MIT 9303), this protein is Recombination protein RecR.